The sequence spans 503 residues: MALDPEQQQPISSVSREFGKSSGEISPEREPLIKENHVPENYSVVAAILPFLFPALGGLLYGYEIGATSCATISLQSPSLSGISWYNLSSVDVGLVTSGSLYGALFGSIVAFTIADVIGRRKELILAALLYLVGALVTALAPTYSVLIIGRVIYGVSVGLAMHAAPMYIAETAPSPIRGQLVSLKEFFIVLGMVGGYGIGSLTVNVHSGWRYMYATSVPLAVIMGIGMWWLPASPRWLLLRVIQGKGNVENQREAAIKSLCCLRGPAFVDSAAEQVNEILAELTFVGEDKEVTFGELFQGKCLKALIIGGGLVLFQQITGQPSVLYYAPSILQTAGFSAAGDATRVSILLGLLKLIMTGVAVVVIDRLGRRPLLLGGVGGMVVSLFLLGSYYLFFSASPVVAVVALLLYVGCYQLSFGPIGWLMISEIFPLKLRGRGLSLAVLVNFGANALVTFAFSPLKELLGAGILFCGFGVICVLSLVFIFFIVPETKGLTLEEIEAKCL.

Polar residues predominate over residues 1 to 15; it reads MALDPEQQQPISSVS. Residues 1-32 form a disordered region; it reads MALDPEQQQPISSVSREFGKSSGEISPEREPL. Ala2 carries the post-translational modification N-acetylalanine. Phosphoserine is present on Ser26. The next 12 membrane-spanning stretches (helical) occupy residues 42–62, 99–119, 124–144, 146–166, 187–207, 213–233, 305–325, 346–366, 375–395, 400–420, 437–457, and 467–487; these read YSVVAAILPFLFPALGGLLYG, GSLYGALFGSIVAFTIADVIG, LILAALLYLVGALVTALAPTY, VLIIGRVIYGVSVGLAMHAAP, FFIVLGMVGGYGIGSLTVNVH, MYATSVPLAVIMGIGMWWLPA, ALIIGGGLVLFQQITGQPSVL, VSILLGLLKLIMTGVAVVVID, LGGVGGMVVSLFLLGSYYLFF, VVAVVALLLYVGCYQLSFGPI, GLSLAVLVNFGANALVTFAFS, and ILFCGFGVICVLSLVFIFFIV.

The protein belongs to the major facilitator superfamily. Sugar transporter (TC 2.A.1.1) family.

Its subcellular location is the membrane. The sequence is that of D-xylose-proton symporter-like 2 from Arabidopsis thaliana (Mouse-ear cress).